The sequence spans 303 residues: uncharacterized protein (303 aa).

The 99-residue stretch at 183–281 folds into the HTH araC/xylS-type domain; sequence KDILFYLNNN…GCSPSDYRRQ (99 aa). DNA-binding regions (H-T-H motif) lie at residues 200–221 and 248–271; these read EQLS…TKEY and QAEI…LRHV.

This is an uncharacterized protein from Escherichia coli (strain K12).